Reading from the N-terminus, the 84-residue chain is Putative membrane protein insertion efficiency factor (84 aa).

This sequence belongs to the UPF0161 family.

It is found in the cell inner membrane. Functionally, could be involved in insertion of integral membrane proteins into the membrane. This chain is Putative membrane protein insertion efficiency factor, found in Shewanella sp. (strain ANA-3).